Reading from the N-terminus, the 676-residue chain is ATP-dependent RNA helicase dbp-9 (676 aa).

Residues 1–97 (MAKRKLNETD…SEKDDADLTF (97 aa)) are disordered. Residues 70–90 (QQLKDEQKQQDEKDEKKQSEK) are compositionally biased toward basic and acidic residues. Residues 95–123 (LTFSDLGLDPRLVQAVAKQSFEKPTLVQR) carry the Q motif motif. Residues 126–304 (IPLALAGQDV…KGFFCRNPTM (179 aa)) form the Helicase ATP-binding domain. Position 139–146 (139–146 (AKTGSGKT)) interacts with ATP. The short motif at 251-254 (DEAD) is the DEAD box element. One can recognise a Helicase C-terminal domain in the interval 317–541 (KLTQFYVKCG…PYNFNKDQME (225 aa)). Residues 410 to 432 (EDEKTEEKKEEQGEKKEGDEKKN) are compositionally biased toward basic and acidic residues. Disordered stretches follow at residues 410–444 (EDEKTEEKKEEQGEKKEGDEKKNGKGKKKKGRRDQ) and 633–676 (FKKQ…RVRK). Residues 642–663 (TRGKKGAKGGKGGHGKYKKGPG) show a composition bias toward basic residues.

It belongs to the DEAD box helicase family. DDX56/DBP9 subfamily.

It is found in the nucleus. The protein resides in the nucleolus. The enzyme catalyses ATP + H2O = ADP + phosphate + H(+). Its function is as follows. ATP-binding RNA helicase involved in the biogenesis of 60S ribosomal subunits and is required for the normal formation of 25S and 5.8S rRNAs. In Neurospora crassa (strain ATCC 24698 / 74-OR23-1A / CBS 708.71 / DSM 1257 / FGSC 987), this protein is ATP-dependent RNA helicase dbp-9 (dbp-9).